Consider the following 393-residue polypeptide: Probable WRKY transcription factor 25 (393 aa).

The segment at residues 160–224 (MVSRNSNDGY…YKGGHNHPKP (65 aa)) is a DNA-binding region (WRKY 1). Cysteine 191, cysteine 196, histidine 219, and histidine 221 together coordinate Zn(2+). 2 disordered regions span residues 217 to 242 (GGHN…VNGR) and 277 to 303 (SEYG…DEGM). Over residues 229-240 (RPSQSSLPSSVN) the composition is skewed to polar residues. Residues 289–298 (PEMKRMKREG) show a composition bias toward basic and acidic residues. The segment at residues 322–387 (SDIDVLIDGF…YEGRHNHDIP (66 aa)) is a DNA-binding region (WRKY 2). Zn(2+) is bound by residues cysteine 353, cysteine 358, histidine 382, and histidine 384.

It belongs to the WRKY group I family. In terms of assembly, interacts with MKS1. Interacts with SIB1. Interacts with VQ10 and CAMBP25/VQ15. Phosphorylated by MPK4. In terms of tissue distribution, highly expressed in roots and at lower levels in leaves, stems and seeds.

It localises to the nucleus. Functionally, transcription factor. Interacts specifically with the W box (5'-(T)TGAC[CT]-3'), a frequently occurring elicitor-responsive cis-acting element. Functions with WRKY33 as positive regulator of salt stress response and abscisic acid (ABA) signaling. Plays a partial role in heat stress tolerance. Functions with WRKY26 and WRKY33 as positive regulator of plant thermotolerance by partially participating in ethylene-response signal transduction pathway. In Arabidopsis thaliana (Mouse-ear cress), this protein is Probable WRKY transcription factor 25 (WRKY25).